We begin with the raw amino-acid sequence, 374 residues long: Dihydroorotate dehydrogenase (quinone) (374 aa).

FMN-binding positions include 78-82 (AGFDK) and threonine 102. Residue lysine 82 coordinates substrate. 127 to 131 (NRMGF) serves as a coordination point for substrate. FMN contacts are provided by asparagine 159 and asparagine 192. Asparagine 192 is a binding site for substrate. The active-site Nucleophile is the serine 195. Asparagine 197 provides a ligand contact to substrate. FMN is bound by residues lysine 230 and threonine 258. Position 259–260 (259–260 (NT)) interacts with substrate. Residues glycine 287, glycine 316, and 337–338 (YT) contribute to the FMN site.

This sequence belongs to the dihydroorotate dehydrogenase family. Type 2 subfamily. As to quaternary structure, monomer. FMN is required as a cofactor.

It is found in the cell membrane. The enzyme catalyses (S)-dihydroorotate + a quinone = orotate + a quinol. It participates in pyrimidine metabolism; UMP biosynthesis via de novo pathway; orotate from (S)-dihydroorotate (quinone route): step 1/1. Functionally, catalyzes the conversion of dihydroorotate to orotate with quinone as electron acceptor. This is Dihydroorotate dehydrogenase (quinone) from Acaryochloris marina (strain MBIC 11017).